We begin with the raw amino-acid sequence, 176 residues long: MAASTDVAGLEESFRKFAIHGDPKASGHEMNGKNWAKLCKDCKVADGKAVTGTDVDIVFSKVKAKSARVINYEEFKKALEELAPKRFKGKSKEEAFDAICQLVAGKEPANVGVTKAKTGGAVERLTDTSKYTGSHKERFDESGKGKGIAGRQDILDDSGYVSAYKNAGTYDAKVKK.

N-acetylalanine is present on Ala2.

It belongs to the TPPP family.

It localises to the cytoplasm. The protein resides in the cytoskeleton. In terms of biological role, regulator of microtubule dynamic that has microtubule bundling activity. Required for embryo implantation; possibly by regulating beta-catenin. Also required for decidualization via regulation of beta-catenin. This chain is Tubulin polymerization-promoting protein family member 3 (TPPP3), found in Bos taurus (Bovine).